Consider the following 387-residue polypeptide: S-adenosylmethionine synthase (387 aa).

Residue His-16 coordinates ATP. Residue Asp-18 participates in Mg(2+) binding. K(+) is bound at residue Glu-44. 2 residues coordinate L-methionine: Glu-57 and Gln-100. Residues 100 to 110 are flexible loop; it reads QSPDIAQGVDR. Residues 167–169, 232–233, Asp-241, 247–248, Ala-264, and Lys-268 contribute to the ATP site; these read DAK, RF, and RK. Asp-241 is an L-methionine binding site. L-methionine is bound at residue Lys-272.

Belongs to the AdoMet synthase family. As to quaternary structure, homotetramer; dimer of dimers. It depends on Mg(2+) as a cofactor. K(+) is required as a cofactor.

It localises to the cytoplasm. It carries out the reaction L-methionine + ATP + H2O = S-adenosyl-L-methionine + phosphate + diphosphate. Its pathway is amino-acid biosynthesis; S-adenosyl-L-methionine biosynthesis; S-adenosyl-L-methionine from L-methionine: step 1/1. Catalyzes the formation of S-adenosylmethionine (AdoMet) from methionine and ATP. The overall synthetic reaction is composed of two sequential steps, AdoMet formation and the subsequent tripolyphosphate hydrolysis which occurs prior to release of AdoMet from the enzyme. This Cupriavidus pinatubonensis (strain JMP 134 / LMG 1197) (Cupriavidus necator (strain JMP 134)) protein is S-adenosylmethionine synthase.